The primary structure comprises 465 residues: GTPase Der (465 aa).

EngA-type G domains follow at residues P3–G167 and V179–T352. GTP is bound by residues G9 to S16, D57 to I61, N119 to D122, G185 to S192, D232 to L236, and N297 to D300. Residues H353–A437 enclose the KH-like domain.

This sequence belongs to the TRAFAC class TrmE-Era-EngA-EngB-Septin-like GTPase superfamily. EngA (Der) GTPase family. In terms of assembly, associates with the 50S ribosomal subunit.

Functionally, GTPase that plays an essential role in the late steps of ribosome biogenesis. This chain is GTPase Der, found in Xanthomonas axonopodis pv. citri (strain 306).